The chain runs to 424 residues: Tyrosine--tRNA ligase (424 aa).

Tyrosine 37 lines the L-tyrosine pocket. The short motif at 42-51 (PTADSLHLGH) is the 'HIGH' region element. At lysine 144 the chain carries N6-acetyllysine. The L-tyrosine site is built by tyrosine 175 and glutamine 179. The 'KMSKS' region signature appears at 235–239 (KFGKT). Residue lysine 238 coordinates ATP. Residues 357-414 (ADLMQALVDSELQPSRGQARKTIASNAITINGEKQSDPEYFFKEEDRLFGRFTLLRRG) enclose the S4 RNA-binding domain.

Belongs to the class-I aminoacyl-tRNA synthetase family. TyrS type 1 subfamily. Homodimer.

Its subcellular location is the cytoplasm. It catalyses the reaction tRNA(Tyr) + L-tyrosine + ATP = L-tyrosyl-tRNA(Tyr) + AMP + diphosphate + H(+). In terms of biological role, catalyzes the attachment of tyrosine to tRNA(Tyr) in a two-step reaction: tyrosine is first activated by ATP to form Tyr-AMP and then transferred to the acceptor end of tRNA(Tyr). The polypeptide is Tyrosine--tRNA ligase (Escherichia coli O127:H6 (strain E2348/69 / EPEC)).